Reading from the N-terminus, the 91-residue chain is UPF0250 protein HCH_05838 (91 aa).

Belongs to the UPF0250 family.

This Hahella chejuensis (strain KCTC 2396) protein is UPF0250 protein HCH_05838.